A 991-amino-acid polypeptide reads, in one-letter code: uncharacterized protein (991 aa).

The signal sequence occupies residues 1–17; it reads MLWPAALVAMFALAARA. Disordered stretches follow at residues 332–352, 392–425, 469–511, 542–569, 587–641, and 658–734; these read DPLP…GETT, TTED…TTEG, EDST…EDTT, DTEA…TTPV, PAPT…NSLS, and ASSG…PPRI. A compositionally biased stretch (low complexity) spans 400–413; the sequence is TSTPTVTTVIDPTS. Over residues 414–425 the composition is skewed to polar residues; the sequence is GAVTTESRTTEG. The segment covering 472-493 has biased composition (low complexity); the sequence is TTTARAAEYPTPTTTTVEPRPA. Positions 542–554 are enriched in polar residues; the sequence is DTEAAQSATSISD. Composition is skewed to low complexity over residues 556–569 and 598–615; these read VTPE…TTPV and ASTT…SHTP. Polar residues-rich tracts occupy residues 617–628 and 658–667; these read PQESTSTPSRAP and ASSGPGASTG. Residues 668-682 show a composition bias toward low complexity; that stretch reads ATTAPISPPWSASPA. Over residues 686–710 the composition is skewed to polar residues; sequence VTTSAARTLEPSSTRKAVAAESTTA.

This is an uncharacterized protein from Psittacid herpesvirus 1 (isolate Amazon parrot/-/97-0001/1997) (PsHV-1).